Consider the following 100-residue polypeptide: Large ribosomal subunit protein bL21 (100 aa).

Belongs to the bacterial ribosomal protein bL21 family. Part of the 50S ribosomal subunit. Contacts protein L20.

Functionally, this protein binds to 23S rRNA in the presence of protein L20. The polypeptide is Large ribosomal subunit protein bL21 (Rhodospirillum rubrum (strain ATCC 11170 / ATH 1.1.1 / DSM 467 / LMG 4362 / NCIMB 8255 / S1)).